We begin with the raw amino-acid sequence, 422 residues long: MLDINYIEQNLDEVIQILNKRNQQDYSEDLKYAVEKNLKRKQILVKSEALKSRKNQLSKEIGILIKDKKNEQADKAKAEVVSLNEQIIKLDEELRIVNDQILEKLSYIPNLSHKDIYFGKSDEDNVEIRKTKHNPLLTHSTPHWEIATKLGLVDFEKGVKLSGSRFLIYTGLGSKLVRAIADILLKRHEKHGYKEIFCPLIVNKSAMLGTGQLPKFSEDMYQVGEQYLIPTSEVPLTNLHANEILTYDMLPLKYTSFTQCFRQEAGSAGRDTKGMIRLHQFNKVELVKITHPDQSMNELESLVKDAEDVLNMFDLPYRVVELCSGDIGFSSAKTYDLEVWFPEQNKYREISSCSNCTDFQARNIQTRFKDKDGKIKLVHTLNGSGVAIDRLIATILENYWDGEKLVLPTILKPYFDNKEFLK.

L-serine is bound at residue 231–233 (TSE). Residue 262-264 (RQE) participates in ATP binding. An L-serine-binding site is contributed by glutamate 285. 349–352 (EISS) is an ATP binding site. Serine 384 contributes to the L-serine binding site.

The protein belongs to the class-II aminoacyl-tRNA synthetase family. Type-1 seryl-tRNA synthetase subfamily. In terms of assembly, homodimer. The tRNA molecule binds across the dimer.

Its subcellular location is the cytoplasm. It carries out the reaction tRNA(Ser) + L-serine + ATP = L-seryl-tRNA(Ser) + AMP + diphosphate + H(+). The catalysed reaction is tRNA(Sec) + L-serine + ATP = L-seryl-tRNA(Sec) + AMP + diphosphate + H(+). It participates in aminoacyl-tRNA biosynthesis; selenocysteinyl-tRNA(Sec) biosynthesis; L-seryl-tRNA(Sec) from L-serine and tRNA(Sec): step 1/1. Its function is as follows. Catalyzes the attachment of serine to tRNA(Ser). Is also able to aminoacylate tRNA(Sec) with serine, to form the misacylated tRNA L-seryl-tRNA(Sec), which will be further converted into selenocysteinyl-tRNA(Sec). This chain is Serine--tRNA ligase, found in Mycoplasma mycoides subsp. mycoides SC (strain CCUG 32753 / NCTC 10114 / PG1).